We begin with the raw amino-acid sequence, 345 residues long: NADH-ubiquinone oxidoreductase chain 2 (345 aa).

Helical transmembrane passes span 1–21 (MNPI…VLTM), 60–80 (FLIQ…NAHL), 110–130 (PIHF…ALII), 149–169 (IPTP…GLGG), 179–196 (MAFS…IITI), 200–222 (LTLF…MHLT), 240–260 (TANL…LSGF), 274–294 (NLVP…MFYL), and 323–343 (TTML…TPTM).

This sequence belongs to the complex I subunit 2 family.

It localises to the mitochondrion inner membrane. It carries out the reaction a ubiquinone + NADH + 5 H(+)(in) = a ubiquinol + NAD(+) + 4 H(+)(out). Core subunit of the mitochondrial membrane respiratory chain NADH dehydrogenase (Complex I) that is believed to belong to the minimal assembly required for catalysis. Complex I functions in the transfer of electrons from NADH to the respiratory chain. The immediate electron acceptor for the enzyme is believed to be ubiquinone. This Varanus melinus (Quince monitor lizard) protein is NADH-ubiquinone oxidoreductase chain 2 (MT-ND2).